Here is a 203-residue protein sequence, read N- to C-terminus: ATP-dependent Clp protease proteolytic subunit 1 (203 aa).

The Nucleophile role is filled by S98. The active site involves H123.

The protein belongs to the peptidase S14 family. In terms of assembly, fourteen ClpP subunits assemble into 2 heptameric rings which stack back to back to give a disk-like structure with a central cavity, resembling the structure of eukaryotic proteasomes.

The protein resides in the cytoplasm. The catalysed reaction is Hydrolysis of proteins to small peptides in the presence of ATP and magnesium. alpha-casein is the usual test substrate. In the absence of ATP, only oligopeptides shorter than five residues are hydrolyzed (such as succinyl-Leu-Tyr-|-NHMec, and Leu-Tyr-Leu-|-Tyr-Trp, in which cleavage of the -Tyr-|-Leu- and -Tyr-|-Trp bonds also occurs).. Its function is as follows. Cleaves peptides in various proteins in a process that requires ATP hydrolysis. Has a chymotrypsin-like activity. Plays a major role in the degradation of misfolded proteins. The sequence is that of ATP-dependent Clp protease proteolytic subunit 1 from Chlamydia felis (strain Fe/C-56) (Chlamydophila felis).